The following is a 469-amino-acid chain: MEGQGVGRTLRLLRNRLPRLRAGQSQNNPGEAVTEPERIQEHSPSSFAGGQHFFEYLLVVSLKKKRLGDDYEPTITYQFPKRENLLRGQQEEEDRLLSAIPLFCFPDGNEWAPLTEYPRETFSFVLTNVDGSRKIGYCRRLLPAGPGPQLPKVYCIISCIGCFGLFSKILDEVEKRHQISMAVIYPFMQGLREAAFPAPGKTVTLKSFIPDSGTEFISLTRPLDSHLEHVDFSVLLHCLHLEQIIQIFASAVLERKIIFLAEGLSTLSQCIHAAAALLYPFSWAHTYIPVVPESLLATVCCPTPFMVGVQMRFLQEVMDSPMEEVLLVNLCEGTFLLSVGDEKDILPPKLQDDILDSLGQGINELKTSEQINEHVSGPFVQFFVKTVGHYASYIKREASGQGHFQERSFCKAVTSKTKRRFVKKFVKTQLFSLFIQEAEKSRNPPAGYFQKKILEYEEQKKQKKSRERL.

Positions 17–44 are disordered; sequence LPRLRAGQSQNNPGEAVTEPERIQEHSP. The uDENN domain maps to 55 to 204; it reads EYLLVVSLKK…AFPAPGKTVT (150 aa). One can recognise a cDENN domain in the interval 226-359; the sequence is HLEHVDFSVL…LQDDILDSLG (134 aa). The dDENN domain maps to 361 to 445; the sequence is GINELKTSEQ…QEAEKSRNPP (85 aa).

The protein localises to the cytoplasm. Guanine nucleotide exchange factor (GEF) which may activate RAB9A and RAB9B. Promotes the exchange of GDP to GTP, converting inactive GDP-bound Rab proteins into their active GTP-bound form. The sequence is that of DENN domain-containing protein 2D (Dennd2d) from Mus musculus (Mouse).